We begin with the raw amino-acid sequence, 466 residues long: Transcription factor SOX-10 (466 aa).

The tract at residues 1–67 is disordered; it reads MAEEQDLSEV…QQDGEADDDK (67 aa). Positions 23–32 are enriched in low complexity; it reads LSPGSAPSLG. Position 24 is a phosphoserine (S24). Residues 62 to 102 are dimerization (DIM); it reads EADDDKFPVCIREAVSQVLSGYDWTLVPMPVRVNGASKSKP. The segment at residues 104 to 172 is a DNA-binding region (HMG box); the sequence is VKRPMNAFMV…QHKKDHPDYK (69 aa). Positions 134-145 match the Nuclear export signal motif; the sequence is LSKTLGKLWRLL. Composition is skewed to basic and acidic residues over residues 160–173 and 254–271; these read LRMQ…DYKY and ADPK…KPHI. 4 disordered regions span residues 160 to 199, 212 to 274, 354 to 375, and 433 to 466; these read LRMQ…EQGG, LDHR…IDFG, AQVK…QPST, and RPLY…LSRP. The interval 228 to 310 is transactivation domain (TAM); it reads PEHPSGQSHG…LPPNGHPGHV (83 aa). The tract at residues 353–466 is transactivation domain (TAC); the sequence is KAQVKTETAG…QPVYTTLSRP (114 aa). The segment covering 440 to 466 has biased composition (polar residues); it reads SDPSPSGPQSHSPTHWEQPVYTTLSRP.

In terms of assembly, monomer. Interacts with ARMCX3 at the mitochondrial outer membrane surface. Interacts with PAX3. In terms of tissue distribution, expressed in fetal brain and in adult brain, heart, small intestine and colon.

The protein localises to the cytoplasm. It localises to the nucleus. It is found in the mitochondrion outer membrane. Its function is as follows. Transcription factor that plays a central role in developing and mature glia. Specifically activates expression of myelin genes, during oligodendrocyte (OL) maturation, such as DUSP15 and MYRF, thereby playing a central role in oligodendrocyte maturation and CNS myelination. Once induced, MYRF cooperates with SOX10 to implement the myelination program. Transcriptional activator of MITF, acting synergistically with PAX3. Transcriptional activator of MBP, via binding to the gene promoter. This is Transcription factor SOX-10 (SOX10) from Homo sapiens (Human).